The chain runs to 128 residues: Small ribosomal subunit protein uS13 (128 aa).

The segment at 85 to 128 (GSYRGLRHRRSLPVRGQRTHTNARTRKGPRRGTVANKKKATGKT) is disordered. Residues 89–128 (GLRHRRSLPVRGQRTHTNARTRKGPRRGTVANKKKATGKT) show a composition bias toward basic residues.

This sequence belongs to the universal ribosomal protein uS13 family. Part of the 30S ribosomal subunit. Forms a loose heterodimer with protein S19. Forms two bridges to the 50S subunit in the 70S ribosome.

In terms of biological role, located at the top of the head of the 30S subunit, it contacts several helices of the 16S rRNA. In the 70S ribosome it contacts the 23S rRNA (bridge B1a) and protein L5 of the 50S subunit (bridge B1b), connecting the 2 subunits; these bridges are implicated in subunit movement. Contacts the tRNAs in the A and P-sites. The protein is Small ribosomal subunit protein uS13 of Solibacter usitatus (strain Ellin6076).